A 582-amino-acid polypeptide reads, in one-letter code: Actin-histidine N-methyltransferase (582 aa).

Residues Arg75, Glu104 to Phe106, Arg254, Asp275 to His279, and Asn325 to Phe327 each bind S-adenosyl-L-methionine. An SET domain is found at Asp94–Gly314. Positions Asp550 to Ser582 are disordered.

It belongs to the class V-like SAM-binding methyltransferase superfamily. SETD3 actin-histidine methyltransferase family.

The protein resides in the cytoplasm. The catalysed reaction is L-histidyl-[protein] + S-adenosyl-L-methionine = N(tele)-methyl-L-histidyl-[protein] + S-adenosyl-L-homocysteine + H(+). Functionally, protein-histidine N-methyltransferase that specifically mediates 3-methylhistidine (tele-methylhistidine) methylation of actin at 'His-73'. Does not have protein-lysine N-methyltransferase activity and probably only catalyzes histidine methylation of actin. In Xenopus tropicalis (Western clawed frog), this protein is Actin-histidine N-methyltransferase.